A 579-amino-acid polypeptide reads, in one-letter code: Cytochrome P450 monooxygenase ORF6 (579 aa).

Asparagine 2 carries N-linked (GlcNAc...) asparagine glycosylation. Residues 7–29 (PLGSFVGTTLLLFILYKLVKLAY) form a helical membrane-spanning segment. Asparagine 194 and asparagine 390 each carry an N-linked (GlcNAc...) asparagine glycan. A heme-binding site is contributed by cysteine 512.

It belongs to the cytochrome P450 family. The cofactor is heme.

The protein resides in the membrane. It participates in sesquiterpene biosynthesis. In terms of biological role, cytochrome P450 monooxygenase; part of the gene cluster that mediates the biosynthesis of PR-toxin, a bicyclic sesquiterpene belonging to the eremophilane class and acting as a mycotoxin. The first step of the pathway is catalyzed by the aristolochene synthase which performs the cyclization of trans,trans-farnesyl diphosphate (FPP) to the bicyclic sesquiterpene aristolochene. Following the formation of aristolochene, the non-oxygenated aristolochene is converted to the trioxygenated intermediate eremofortin B, via 7-epi-neopetasone. This conversion appears to involve three enzymes, a hydroxysterol oxidase-like enzyme, the quinone-oxidase prx3 that forms the quinone-type-structure in the bicyclic nucleus of aristolochene with the C8-oxo group and the C-3 hydroxyl group, and the P450 monooxygenase ORF6 that introduces the epoxide at the double bond between carbons 1 and 2. No monoxy or dioxy-intermediates have been reported to be released to the broth, so these three early oxidative reactions may be coupled together. Eremofortin B is further oxidized by another P450 monooxygenase, that introduces a second epoxide between carbons 7 and 11 prior to acetylation to eremofortin A by the acetyltransferase ORF8. The second epoxidation may be performed by a second P450 monooxygenase. After the acetylation step, eremofortin A is converted to eremofortin C and then to PR-toxin. First the conversion of eremofortin A to eremofortin C proceeds by oxidation of the side chain of the molecule at C-12 and is catalyzed by the short-chain oxidoreductase prx1. The cytochrome P450 monooxygenase ORF6 is probably also involved in this step. The primary alcohol formed at C-12 is finally oxidized by the short-chain alcohol dehydrogenase prx4 that forms PR-toxin. The polypeptide is Cytochrome P450 monooxygenase ORF6 (Penicillium roqueforti (strain FM164)).